The primary structure comprises 426 residues: Serine--tRNA ligase (426 aa).

233–235 serves as a coordination point for L-serine; sequence TAE. 264-266 is an ATP binding site; the sequence is RRE. An L-serine-binding site is contributed by glutamate 287. Residue 351–354 coordinates ATP; sequence EISS. Serine 386 is a binding site for L-serine.

Belongs to the class-II aminoacyl-tRNA synthetase family. Type-1 seryl-tRNA synthetase subfamily. As to quaternary structure, homodimer. The tRNA molecule binds across the dimer.

It localises to the cytoplasm. The enzyme catalyses tRNA(Ser) + L-serine + ATP = L-seryl-tRNA(Ser) + AMP + diphosphate + H(+). It catalyses the reaction tRNA(Sec) + L-serine + ATP = L-seryl-tRNA(Sec) + AMP + diphosphate + H(+). The protein operates within aminoacyl-tRNA biosynthesis; selenocysteinyl-tRNA(Sec) biosynthesis; L-seryl-tRNA(Sec) from L-serine and tRNA(Sec): step 1/1. Its function is as follows. Catalyzes the attachment of serine to tRNA(Ser). Is also able to aminoacylate tRNA(Sec) with serine, to form the misacylated tRNA L-seryl-tRNA(Sec), which will be further converted into selenocysteinyl-tRNA(Sec). This is Serine--tRNA ligase from Prochlorococcus marinus (strain NATL2A).